A 685-amino-acid polypeptide reads, in one-letter code: Sodium-dependent phosphate transporter 1-B (685 aa).

6 consecutive transmembrane segments (helical) span residues 21–41, 66–86, 106–126, 162–182, 207–227, and 234–254; these read IMAP…VLAF, ACIL…AKVS, LMAG…AASF, IVLS…LLFF, ACTI…LLGF, and GIIL…WFFV. Positions 489 to 511 are disordered; that stretch reads EGCIEDVVTDRKSSSSSLEERHD. Positions 496-511 are enriched in basic and acidic residues; sequence VTDRKSSSSSLEERHD. The next 4 helical transmembrane spans lie at 517-537, 565-585, 606-626, and 656-676; these read VSLL…FAHG, ATPI…LWVW, FSIE…GLPI, and IFLA…GIMA.

The protein belongs to the inorganic phosphate transporter (PiT) (TC 2.A.20) family.

The protein localises to the membrane. Sodium-phosphate symporter which plays a fundamental housekeeping role in phosphate transport. This chain is Sodium-dependent phosphate transporter 1-B (slc20a1-b), found in Xenopus laevis (African clawed frog).